We begin with the raw amino-acid sequence, 349 residues long: Phosphoribosylformylglycinamidine cyclo-ligase (349 aa).

This sequence belongs to the AIR synthase family.

It localises to the cytoplasm. The catalysed reaction is 2-formamido-N(1)-(5-O-phospho-beta-D-ribosyl)acetamidine + ATP = 5-amino-1-(5-phospho-beta-D-ribosyl)imidazole + ADP + phosphate + H(+). Its pathway is purine metabolism; IMP biosynthesis via de novo pathway; 5-amino-1-(5-phospho-D-ribosyl)imidazole from N(2)-formyl-N(1)-(5-phospho-D-ribosyl)glycinamide: step 2/2. In Bordetella petrii (strain ATCC BAA-461 / DSM 12804 / CCUG 43448), this protein is Phosphoribosylformylglycinamidine cyclo-ligase.